An 86-amino-acid polypeptide reads, in one-letter code: Large ribosomal subunit protein bL31B (86 aa).

This sequence belongs to the bacterial ribosomal protein bL31 family. Type B subfamily. As to quaternary structure, part of the 50S ribosomal subunit.

The sequence is that of Large ribosomal subunit protein bL31B from Cupriavidus taiwanensis (strain DSM 17343 / BCRC 17206 / CCUG 44338 / CIP 107171 / LMG 19424 / R1) (Ralstonia taiwanensis (strain LMG 19424)).